Here is a 476-residue protein sequence, read N- to C-terminus: Aspartyl/glutamyl-tRNA(Asn/Gln) amidotransferase subunit B (476 aa).

Belongs to the GatB/GatE family. GatB subfamily. As to quaternary structure, heterotrimer of A, B and C subunits.

The catalysed reaction is L-glutamyl-tRNA(Gln) + L-glutamine + ATP + H2O = L-glutaminyl-tRNA(Gln) + L-glutamate + ADP + phosphate + H(+). It carries out the reaction L-aspartyl-tRNA(Asn) + L-glutamine + ATP + H2O = L-asparaginyl-tRNA(Asn) + L-glutamate + ADP + phosphate + 2 H(+). Its function is as follows. Allows the formation of correctly charged Asn-tRNA(Asn) or Gln-tRNA(Gln) through the transamidation of misacylated Asp-tRNA(Asn) or Glu-tRNA(Gln) in organisms which lack either or both of asparaginyl-tRNA or glutaminyl-tRNA synthetases. The reaction takes place in the presence of glutamine and ATP through an activated phospho-Asp-tRNA(Asn) or phospho-Glu-tRNA(Gln). This is Aspartyl/glutamyl-tRNA(Asn/Gln) amidotransferase subunit B from Lactobacillus gasseri (strain ATCC 33323 / DSM 20243 / BCRC 14619 / CIP 102991 / JCM 1131 / KCTC 3163 / NCIMB 11718 / NCTC 13722 / AM63).